Here is a 56-residue protein sequence, read N- to C-terminus: Prokaryotic ubiquitin-like protein UBact (56 aa).

The segment at 1 to 56 (MPERIVKPMPQDPVTKPGDEGPRTPNVPKPDTERLLERMRRVDPRQAQRYRQRSGE) is disordered. The segment covering 30 to 46 (PDTERLLERMRRVDPRQ) has biased composition (basic and acidic residues). Residue E56 forms an Isoglutamyl lysine isopeptide (Glu-Lys) (interchain with K-? in acceptor proteins) linkage.

It belongs to the ubiquitin-like protein UBact family.

Its function is as follows. May function as a protein modifier covalently attached to lysine residues of substrate proteins. This may serve to target the modified proteins for degradation by proteasomes. This Acetithermum autotrophicum protein is Prokaryotic ubiquitin-like protein UBact.